The chain runs to 533 residues: Undecaprenyl phosphate-alpha-4-amino-4-deoxy-L-arabinose arabinosyl transferase (533 aa).

13 helical membrane passes run 10 to 30 (LLLA…GLWI), 64 to 84 (PAGY…LFGV), 86 to 106 (IASA…AGKI), 113 to 133 (SFAS…AGYS), 137 to 157 (PQFT…VHSI), 170 to 190 (VACG…PAII), 207 to 227 (FGPL…LAVH), 257 to 277 (WWFY…LLPV), 290 to 310 (DTAF…LSKG), 312 to 332 (LPTY…DALV), 345 to 365 (VNGI…IYVQ), 377 to 397 (HLLL…LQGI), and 402 to 422 (FWAL…AALP).

Belongs to the glycosyltransferase 83 family.

It is found in the cell inner membrane. The enzyme catalyses 4-amino-4-deoxy-alpha-L-arabinopyranosyl di-trans,octa-cis-undecaprenyl phosphate + lipid IVA = lipid IIA + di-trans,octa-cis-undecaprenyl phosphate.. It participates in lipopolysaccharide metabolism; 4-amino-4-deoxy-beta-L-arabinose-lipid A biosynthesis. Catalyzes the transfer of the L-Ara4N moiety of the glycolipid undecaprenyl phosphate-alpha-L-Ara4N to lipid A. The modified arabinose is attached to lipid A and is required for resistance to polymyxin and cationic antimicrobial peptides. The sequence is that of Undecaprenyl phosphate-alpha-4-amino-4-deoxy-L-arabinose arabinosyl transferase from Pseudomonas savastanoi pv. phaseolicola (strain 1448A / Race 6) (Pseudomonas syringae pv. phaseolicola (strain 1448A / Race 6)).